Reading from the N-terminus, the 258-residue chain is MIFVLDVGNTNTVLGVYDGDELKHHWRIETSRSKTEDEYGMMIKALLNHVGLQFSDIRGIIISSVVPPIMFALERMCLKYFHIKPLIVGPGIKTGLDIKYDNPREVGADRIVNAVAGIHLYGSPLIIVDFGTATTYCYINEHKQYMGGAIAPGIMISTEALFARAAKLPRIEIARPDDIIGKNTVSAMQAGILYGYVGQVEGIVSRMKAKSKIPPKVIATGGLAPLIASESDIIDVVDPFLTLTGLKLLYEKNTEKKG.

6–13 (DVGNTNTV) serves as a coordination point for ATP. Substrate is bound by residues tyrosine 100 and 107-110 (GADR). Aspartate 109 acts as the Proton acceptor in catalysis. K(+) is bound at residue aspartate 129. Residue threonine 132 coordinates ATP. Threonine 184 lines the substrate pocket.

This sequence belongs to the type III pantothenate kinase family. As to quaternary structure, homodimer. It depends on NH4(+) as a cofactor. Requires K(+) as cofactor.

The protein resides in the cytoplasm. The enzyme catalyses (R)-pantothenate + ATP = (R)-4'-phosphopantothenate + ADP + H(+). Its pathway is cofactor biosynthesis; coenzyme A biosynthesis; CoA from (R)-pantothenate: step 1/5. Its function is as follows. Catalyzes the phosphorylation of pantothenate (Pan), the first step in CoA biosynthesis. The chain is Type III pantothenate kinase from Geobacillus kaustophilus (strain HTA426).